The following is a 327-amino-acid chain: Annexin A8 (327 aa).

Annexin repeat units lie at residues 21–92 (FNPV…ALMY), 93–164 (PPYR…CLLQ), 177–249 (GLAL…TIVK), and 253–324 (NLHC…SLVG). 4 residues coordinate Ca(2+): methionine 266, glycine 268, glycine 270, and aspartate 310.

This sequence belongs to the annexin family.

In terms of biological role, this protein is an anticoagulant protein that acts as an indirect inhibitor of the thromboplastin-specific complex, which is involved in the blood coagulation cascade. The sequence is that of Annexin A8 (ANXA8) from Oryctolagus cuniculus (Rabbit).